The primary structure comprises 137 residues: Small ribosomal subunit protein eS19 (137 aa).

It belongs to the eukaryotic ribosomal protein eS19 family. In terms of assembly, component of the small ribosomal subunit.

It localises to the cytoplasm. The protein is Small ribosomal subunit protein eS19 (RPS19) of Encephalitozoon cuniculi (strain GB-M1) (Microsporidian parasite).